The sequence spans 296 residues: Magnetosome protein MamB (296 aa).

Over 1 to 12 the chain is Cytoplasmic; sequence MKFENCRDCREE. The interval 1–214 is transmembrane domain (TMD); it reads MKFENCRDCR…GLMDSSVDTE (214 aa). A helical transmembrane segment spans residues 13–33; sequence VVWWAFTADICMTLFKGVLGL. At 34–83 the chain is on the lumenal side; it reads MSGSVALVADSLHSGADVVASGVTQLSLKISNKPADERYPFGYGNIQYIS. The chain crosses the membrane as a helical span at residues 84-104; that stretch reads SSIVGSLLLIGASFLMYGSVM. Residues 105–112 lie on the Cytoplasmic side of the membrane; that stretch reads KLISGTYE. Residues 113–133 traverse the membrane as a helical segment; it reads APSIFAAVGASVTVIVNELMY. Residues 134 to 164 are Lumenal-facing; that stretch reads RYQICVGNENNSPAIIANAWDNRSDAISSAA. The chain crosses the membrane as a helical span at residues 165-185; it reads VMVGVIASVIGFPIADTIAAI. Topologically, residues 186–296 are cytoplasmic; the sequence is GVSALVGRIG…SPAPAAAARA (111 aa). A C-terminal domain (CTD) region spans residues 215 to 296; the sequence is LLQTAWQVAM…SPAPAAAARA (82 aa).

It belongs to the cation diffusion facilitator (CDF) transporter (TC 2.A.4) family. Forms heterodimers with MamM. Probably interacts with MamE.

It is found in the magnetosome membrane. Its function is as follows. Plays a dual, essential role in magnetosome formation; required for magnetosome vesicle formation as well as biomineralization. Probably binds and transports iron. Requires heterodimerization with MamM for stability. This chain is Magnetosome protein MamB (mamB), found in Paramagnetospirillum magneticum (strain ATCC 700264 / AMB-1) (Magnetospirillum magneticum).